A 1875-amino-acid chain; its full sequence is Neuron navigator 1 (1875 aa).

N-acetylmethionine is present on methionine 1. The interval 1–63 (MLGSSVKSVQ…GGSGSMAKAS (63 aa)) is disordered. 2 positions are modified to phosphoserine: serine 93 and serine 145. Disordered regions lie at residues 115 to 230 (SDDM…EERA) and 280 to 339 (SSLR…VGGS). A Phosphothreonine modification is found at threonine 162. Phosphoserine is present on residues serine 197 and serine 202. The stretch at 258–283 (ESQRKRTVQNVLDLRQNLEETMSSLR) forms a coiled coil. Polar residues predominate over residues 280–291 (SSLRGSQVTHSS). Phosphoserine occurs at positions 299, 311, 315, 365, and 394. The span at 304–318 (PRSVSSLSNRSSPLS) shows a compositional bias: low complexity. Disordered regions lie at residues 391-463 (GYMS…RTDS) and 477-783 (SESE…AELP). 2 stretches are compositionally biased toward low complexity: residues 414–428 (DESS…DASD) and 436–456 (NASS…RSST). Phosphoserine is present on residues serine 455, serine 477, serine 479, and serine 493. The segment covering 479–489 (SEEKTPKKLEY) has biased composition (basic and acidic residues). Over residues 506–522 (ERPESCDDASKGGELKK) the composition is skewed to basic and acidic residues. Serine 531 carries the phosphoserine modification. Residue threonine 537 is modified to Phosphothreonine. Phosphoserine is present on serine 544. Residue threonine 547 is modified to Phosphothreonine. Basic and acidic residues predominate over residues 558 to 569 (GKPEGKATDKGK). Position 575 is a phosphothreonine (threonine 575). The span at 584–594 (AGRDRLSDAKK) shows a compositional bias: basic and acidic residues. 2 stretches are compositionally biased toward polar residues: residues 618–638 (GTAT…QKSS) and 648–658 (RKTSLDVSNSV). Position 651 is a phosphoserine (serine 651). Arginine 690 carries the post-translational modification Omega-N-methylarginine. Polar residues-rich tracts occupy residues 696-712 (VSSS…QGGL) and 726-735 (GRSTPAPVNQ). Residues 733 to 758 (VNQTDREKEKAKAKAVALDSDNISLK) are a coiled coil. Serine 752, serine 756, serine 762, serine 799, and serine 810 each carry phosphoserine. Over residues 753 to 772 (DNISLKSIGSPESTPKNQAS) the composition is skewed to polar residues. 2 disordered regions span residues 800-840 (LANL…PLPS) and 893-982 (MSLP…SPPA). Composition is skewed to low complexity over residues 807-818 (NSNSLDLPSSSD) and 893-902 (MSLPSAFPSS). Serine 998 is modified (phosphoserine). Residue threonine 1004 is modified to Phosphothreonine. Residues 1070–1161 (SSAEERMQSE…SEAQAVIQGA (92 aa)) adopt a coiled-coil conformation. Threonine 1168 carries the post-translational modification Phosphothreonine. 4 disordered regions span residues 1172 to 1202 (LRIK…KDAD), 1242 to 1306 (ATPD…KEVS), 1359 to 1381 (VAPG…LSSP), and 1808 to 1841 (KLYH…SLDS). Serine 1179 is subject to Phosphoserine. Over residues 1179–1198 (SSDSISSLNSITSHSSIGSS) the composition is skewed to low complexity. A compositionally biased stretch (polar residues) spans 1244–1259 (PDSSAPSSPKLQHGST). Residues 1260 to 1281 (ETASPSIKSSTSSSVGTEVTET) show a composition bias toward low complexity. Phosphoserine is present on serine 1263. Residues 1301–1360 (EKKEVSELRSELWEKEMKLTDIRLEALNSAHQLDQLRETMHNMQLEVDLLKAENDRLKVA) adopt a coiled-coil conformation. The segment covering 1365–1381 (SGCTPGQVPGSSALSSP) has biased composition (polar residues). Serine 1380 is modified (phosphoserine).

This sequence belongs to the Nav/unc-53 family. As to quaternary structure, interacts with tubulin. Expressed in heart and brain. Present in brain (at protein level). In adult brain, found almost exclusively in areas of secondary neurogenesis from the hippocampus and the subventricular zone.

It is found in the cytoplasm. The protein resides in the cytoskeleton. Its function is as follows. May be involved in neuronal migration. The sequence is that of Neuron navigator 1 (Nav1) from Mus musculus (Mouse).